Consider the following 341-residue polypeptide: MIEFKNVNKVFRKKRETIQALKNVSFKIDQHDIFGVIGYSGAGKSTLVRLVNQLETVSDGQVIVDGHEIDTYKEKDLRDIKKDIGMIFQHFNLLNSKSVYKNVAMPLILSKTNKKEIKEKVDEMLEFVGLADKKDQFPDELSGGQKQRVAIARALVTHPKILLCDEATSALDPATTSSILNLLSNVNRTFGVTIMMITHEMSVIQKICHRVAVMENGEVIEMGTVKDVFSHPQTNTAKNFVSTVINTEPSKELRASFNSRKDSNFTDYKLFLDSEQIQLPILNELINEHHLNVNVLFSSMSEIQDETVCYLWLRFEHDESFNDFKLTDYLSKRHIRYEEVI.

The ABC transporter domain maps to 2 to 241; it reads IEFKNVNKVF…PQTNTAKNFV (240 aa). 38–45 contacts ATP; the sequence is GYSGAGKS.

Belongs to the ABC transporter superfamily. Methionine importer (TC 3.A.1.24) family. In terms of assembly, the complex is composed of two ATP-binding proteins (MetN), two transmembrane proteins (MetI) and a solute-binding protein (MetQ).

It localises to the cell membrane. The catalysed reaction is L-methionine(out) + ATP + H2O = L-methionine(in) + ADP + phosphate + H(+). It catalyses the reaction D-methionine(out) + ATP + H2O = D-methionine(in) + ADP + phosphate + H(+). Part of the ABC transporter complex MetNIQ involved in methionine import. Responsible for energy coupling to the transport system. This is Methionine import ATP-binding protein MetN 1 from Staphylococcus epidermidis (strain ATCC 35984 / DSM 28319 / BCRC 17069 / CCUG 31568 / BM 3577 / RP62A).